Reading from the N-terminus, the 252-residue chain is Ribosome maturation factor RimP (252 aa).

The tract at residues 188–252 (QGAAPGTEGG…PAAGPGAQDE (65 aa)) is disordered. Over residues 208 to 224 (ARRPHQPKPKKAKKKGP) the composition is skewed to basic residues.

This sequence belongs to the RimP family.

It is found in the cytoplasm. Required for maturation of 30S ribosomal subunits. The chain is Ribosome maturation factor RimP from Rhodospirillum centenum (strain ATCC 51521 / SW).